Reading from the N-terminus, the 195-residue chain is Probable GTP-binding protein EngB (195 aa).

Positions 24–195 (DWPEIALAGR…EAWTAILKYL (172 aa)) constitute an EngB-type G domain. GTP is bound by residues 32–39 (GRSNVGKS), 59–63 (GKTQL), 77–80 (DVPG), 144–147 (TKAD), and 176–178 (FSS). Residues S39 and T61 each contribute to the Mg(2+) site.

The protein belongs to the TRAFAC class TrmE-Era-EngA-EngB-Septin-like GTPase superfamily. EngB GTPase family. Requires Mg(2+) as cofactor.

Its function is as follows. Necessary for normal cell division and for the maintenance of normal septation. In Lactococcus lactis subsp. cremoris (strain MG1363), this protein is Probable GTP-binding protein EngB.